Consider the following 612-residue polypeptide: Dihydroxy-acid dehydratase (612 aa).

D81 is a binding site for Mg(2+). C122 lines the [2Fe-2S] cluster pocket. Mg(2+)-binding residues include D123 and K124. Residue K124 is modified to N6-carboxylysine. C195 contributes to the [2Fe-2S] cluster binding site. Position 491 (E491) interacts with Mg(2+). The active-site Proton acceptor is S517.

Belongs to the IlvD/Edd family. As to quaternary structure, homodimer. It depends on [2Fe-2S] cluster as a cofactor. The cofactor is Mg(2+).

The catalysed reaction is (2R)-2,3-dihydroxy-3-methylbutanoate = 3-methyl-2-oxobutanoate + H2O. It carries out the reaction (2R,3R)-2,3-dihydroxy-3-methylpentanoate = (S)-3-methyl-2-oxopentanoate + H2O. It participates in amino-acid biosynthesis; L-isoleucine biosynthesis; L-isoleucine from 2-oxobutanoate: step 3/4. The protein operates within amino-acid biosynthesis; L-valine biosynthesis; L-valine from pyruvate: step 3/4. Functions in the biosynthesis of branched-chain amino acids. Catalyzes the dehydration of (2R,3R)-2,3-dihydroxy-3-methylpentanoate (2,3-dihydroxy-3-methylvalerate) into 2-oxo-3-methylpentanoate (2-oxo-3-methylvalerate) and of (2R)-2,3-dihydroxy-3-methylbutanoate (2,3-dihydroxyisovalerate) into 2-oxo-3-methylbutanoate (2-oxoisovalerate), the penultimate precursor to L-isoleucine and L-valine, respectively. The chain is Dihydroxy-acid dehydratase from Haemophilus influenzae (strain PittEE).